Consider the following 628-residue polypeptide: Monoterpene synthase like 2, chloroplastic (628 aa).

3 residues coordinate Mg(2+): aspartate 379, aspartate 383, and aspartate 531. The DDXXD motif signature appears at 379 to 383; that stretch reads DDIYD.

The protein belongs to the terpene synthase family. Tpsd subfamily. Mg(2+) serves as cofactor. It depends on Mn(2+) as a cofactor.

Its subcellular location is the plastid. The protein resides in the chloroplast. It functions in the pathway terpene metabolism; oleoresin biosynthesis. The protein operates within secondary metabolite biosynthesis; terpenoid biosynthesis. Functionally, monoterpene synthase (TPS) involved in the biosynthesis of monoterpene natural products included in conifer oleoresin secretions and volatile emissions; these compounds contribute to biotic and abiotic stress defense against herbivores and pathogens. The protein is Monoterpene synthase like 2, chloroplastic of Pinus banksiana (Jack pine).